The sequence spans 122 residues: Large ribosomal subunit protein uL14 (122 aa).

It belongs to the universal ribosomal protein uL14 family. Part of the 50S ribosomal subunit. Forms a cluster with proteins L3 and L19. In the 70S ribosome, L14 and L19 interact and together make contacts with the 16S rRNA in bridges B5 and B8.

Binds to 23S rRNA. Forms part of two intersubunit bridges in the 70S ribosome. The chain is Large ribosomal subunit protein uL14 from Staphylococcus epidermidis (strain ATCC 35984 / DSM 28319 / BCRC 17069 / CCUG 31568 / BM 3577 / RP62A).